Reading from the N-terminus, the 418-residue chain is Protein fuzzy homolog (418 aa).

This sequence belongs to the fuzzy family. In terms of assembly, interacts with rsg1. Interacts with intu and wdpcp; fuz, intu and wdpcp probably form the core CPLANE (ciliogenesis and planar polarity effectors) complex.

The protein resides in the cytoplasm. It localises to the cytoskeleton. The protein localises to the cilium basal body. In terms of biological role, probable planar cell polarity effector involved in cilium biogenesis. Proposed to function as core component of the CPLANE (ciliogenesis and planar polarity effectors) complex involved in the recruitment of peripheral IFT-A proteins to basal bodies. May regulate protein and membrane transport to the cilium. May control the organization of the apical actin cytoskeleton, which is essential for the normal orientation of elongating ciliary microtubules. The chain is Protein fuzzy homolog (fuz) from Xenopus tropicalis (Western clawed frog).